The chain runs to 185 residues: ATP synthase subunit b 2 (185 aa).

Residues 1–23 (MAEGHGDAKGATAHTAADGGHKA) form a disordered region. Positions 9 to 18 (KGATAHTAAD) are enriched in low complexity. The chain crosses the membrane as a helical span at residues 37–57 (LVSLTIAFVALYLIVSKIILP).

The protein belongs to the ATPase B chain family. F-type ATPases have 2 components, F(1) - the catalytic core - and F(0) - the membrane proton channel. F(1) has five subunits: alpha(3), beta(3), gamma(1), delta(1), epsilon(1). F(0) has three main subunits: a(1), b(2) and c(10-14). The alpha and beta chains form an alternating ring which encloses part of the gamma chain. F(1) is attached to F(0) by a central stalk formed by the gamma and epsilon chains, while a peripheral stalk is formed by the delta and b chains.

The protein localises to the cell inner membrane. In terms of biological role, f(1)F(0) ATP synthase produces ATP from ADP in the presence of a proton or sodium gradient. F-type ATPases consist of two structural domains, F(1) containing the extramembraneous catalytic core and F(0) containing the membrane proton channel, linked together by a central stalk and a peripheral stalk. During catalysis, ATP synthesis in the catalytic domain of F(1) is coupled via a rotary mechanism of the central stalk subunits to proton translocation. Its function is as follows. Component of the F(0) channel, it forms part of the peripheral stalk, linking F(1) to F(0). The b'-subunit is a diverged and duplicated form of b found in plants and photosynthetic bacteria. The sequence is that of ATP synthase subunit b 2 (atpF2) from Rhodopseudomonas palustris (strain BisB5).